The chain runs to 887 residues: Pyruvate dehydrogenase E1 component (887 aa).

Positions 231, 261, and 263 each coordinate Mg(2+). Residue Lys-716 is modified to N6-acetyllysine.

As to quaternary structure, homodimer. Part of the PDH complex, consisting of multiple copies of pyruvate dehydrogenase (E1), dihydrolipoamide acetyltransferase (E2) and lipoamide dehydrogenase (E3). Mg(2+) serves as cofactor. It depends on thiamine diphosphate as a cofactor.

It catalyses the reaction N(6)-[(R)-lipoyl]-L-lysyl-[protein] + pyruvate + H(+) = N(6)-[(R)-S(8)-acetyldihydrolipoyl]-L-lysyl-[protein] + CO2. Its function is as follows. Component of the pyruvate dehydrogenase (PDH) complex, that catalyzes the overall conversion of pyruvate to acetyl-CoA and CO(2). This Escherichia coli O157:H7 protein is Pyruvate dehydrogenase E1 component (aceE).